The sequence spans 64 residues: Large ribosomal subunit protein uL30 (64 aa).

Belongs to the universal ribosomal protein uL30 family. In terms of assembly, part of the 50S ribosomal subunit.

In Bradyrhizobium diazoefficiens (strain JCM 10833 / BCRC 13528 / IAM 13628 / NBRC 14792 / USDA 110), this protein is Large ribosomal subunit protein uL30.